The following is a 425-amino-acid chain: MREPDFLNHFLKKGYFKKHAKAVLALSGGLDSMFLFKVLSTYQKELEIELILAHVNHKQRIESDWEEKELRKLAAEAELPIYISNFSGEFSEARARNFRYDFFQEVMKKTGATALVTAHHADDQVETIFMRLIRGTRLRYLSGIKEKQVVGEIEIIRPFLHFQKKDFPSIFHFEDTSNQENHYFRNRIRNSYLPELEKENPRFRDAILGIGNEILDYDLAIAELSNNINVEDLQQLFSYSESTQRVLLQTYLNRFPDLNLTKAQFAEVQQILKSKSQYRHPIKNGYELIKEYQQFQICKISPQADEEEDELVLHYQNQVAYQGYLFSFGLPLEGESIQQIPVSRETSIHIRHRKTGDVLIQNGHRKKLRRLFIDLKIPMEKRNSALIIEQFGEIVSILGIATNNLSKKTKNDIMNTVLYIEKIDR.

27-32 serves as a coordination point for ATP; it reads SGGLDS.

The protein belongs to the tRNA(Ile)-lysidine synthase family.

It localises to the cytoplasm. It carries out the reaction cytidine(34) in tRNA(Ile2) + L-lysine + ATP = lysidine(34) in tRNA(Ile2) + AMP + diphosphate + H(+). Functionally, ligates lysine onto the cytidine present at position 34 of the AUA codon-specific tRNA(Ile) that contains the anticodon CAU, in an ATP-dependent manner. Cytidine is converted to lysidine, thus changing the amino acid specificity of the tRNA from methionine to isoleucine. This is tRNA(Ile)-lysidine synthase from Streptococcus pneumoniae (strain 70585).